Here is a 366-residue protein sequence, read N- to C-terminus: MDPNPKPAISGKDNGVFEHRSFARIGFLGNPSDVYFGRTISFTIGNFWAWAKLEPSDHLLIKPHPFHDLVQFDSLDNLVYRLENDGYYGGVRLLMAICKVFRNYCKENGIQLHDKNFTLSYDTNIPRQTGLSGSSAIVSAALSCLLDFYNVRQSIRIEVRPNLILNAEKELGIVAGLQDRVAQVYGGGLVHMDFSKEHMDKVGYGIYTIMDINLLPPLHLIYAENPSDSGKVHSTVRRRWLDGDEFIISSMAEIAKLAEEGRTALLKKDYSNLKELMNRNFDLRRSMFGDECLGAMNIEMVEVARKIGAAAKFTGSGGAVVVFCPEGPSQVKLLEEECRKSGFIVEPVKLVPTRLSSSDIKTLSKT.

An ATP-binding site is contributed by 126–136 (PRQTGLSGSSA). Catalysis depends on aspartate 179, which acts as the Proton acceptor.

Belongs to the GHMP kinase family. Mg(2+) is required as a cofactor. Requires Mn(2+) as cofactor. The cofactor is Co(2+).

It carries out the reaction D-glucuronate + ATP = 1-phospho-alpha-D-glucuronate + ADP + H(+). In terms of biological role, sugar-1-kinase with a strict substrate specificity for D-glucuronic acid and ATP. Involved in the biosynthesis of UDP-glucuronic acid (UDP-GlcA), providing nucleotide sugars for cell-wall polymers. May be also involved in a salvage pathway for glucuronic acid. The protein is Probable glucuronokinase 2 (GLCAK2) of Arabidopsis thaliana (Mouse-ear cress).